Reading from the N-terminus, the 454-residue chain is Mitochondrial dynamics protein MID49 (454 aa).

Residues 1–22 (MAEFSQKRGKRRGDEGLGSMVD) are Mitochondrial intermembrane-facing. The chain crosses the membrane as a helical span at residues 23 to 43 (FLLANARLVLGVGGAAVLGIA). Topologically, residues 44-454 (TLAVKRFIDR…SGLQEPEGLL (411 aa)) are cytoplasmic. The disordered stretch occupies residues 76–119 (ATPHLQPRPPPAALSQPVLPLAPSSSAPEGPAKSDPEVTPQLSS). Residues 88–108 (ALSQPVLPLAPSSSAPEGPAK) are compositionally biased toward low complexity.

It belongs to the MID49/MID51 family. Interacts with DNM1L.

It localises to the mitochondrion outer membrane. Mitochondrial outer membrane protein which regulates mitochondrial organization. It is required for mitochondrial fission and promotes the recruitment and association of the fission mediator dynamin-related protein 1 (DNM1L) to the mitochondrial surface independently of the mitochondrial fission FIS1 and MFF proteins. Regulates DNM1L GTPase activity. The chain is Mitochondrial dynamics protein MID49 (MIEF2) from Pongo abelii (Sumatran orangutan).